Reading from the N-terminus, the 117-residue chain is Regulator of ribonuclease activity B (117 aa).

The protein belongs to the RraB family. As to quaternary structure, interacts with the C-terminal region of Rne.

It localises to the cytoplasm. Functionally, globally modulates RNA abundance by binding to RNase E (Rne) and regulating its endonucleolytic activity. Can modulate Rne action in a substrate-dependent manner by altering the composition of the degradosome. The polypeptide is Regulator of ribonuclease activity B (Pseudoalteromonas atlantica (strain T6c / ATCC BAA-1087)).